A 279-amino-acid polypeptide reads, in one-letter code: Probable endonuclease 4 (279 aa).

Zn(2+) is bound by residues histidine 68, histidine 108, glutamate 143, aspartate 177, histidine 180, histidine 214, aspartate 227, histidine 229, and glutamate 259.

The protein belongs to the AP endonuclease 2 family. The cofactor is Zn(2+).

The catalysed reaction is Endonucleolytic cleavage to 5'-phosphooligonucleotide end-products.. Endonuclease IV plays a role in DNA repair. It cleaves phosphodiester bonds at apurinic or apyrimidinic (AP) sites, generating a 3'-hydroxyl group and a 5'-terminal sugar phosphate. This is Probable endonuclease 4 from Nitrosopumilus maritimus (strain SCM1).